Here is a 500-residue protein sequence, read N- to C-terminus: Galactofuranose transporter ATP-binding protein YtfR (500 aa).

ABC transporter domains are found at residues 10–245 and 259–497; these read LRTE…LGRE and LSDK…IMNA. 42–49 serves as a coordination point for ATP; the sequence is GENGAGKS.

It belongs to the ABC transporter superfamily. In terms of assembly, the complex is composed of two ATP-binding proteins (YtfR), two transmembrane proteins (YtfT and YjfF) and a solute-binding protein (YtfQ).

It localises to the cell inner membrane. The enzyme catalyses D-galactofuranose(out) + ATP + H2O = D-galactofuranose(in) + ADP + phosphate + H(+). In terms of biological role, part of the ABC transporter complex YtfQRT-YjfF involved in galactofuranose transport. Responsible for energy coupling to the transport system. The polypeptide is Galactofuranose transporter ATP-binding protein YtfR (ytfR) (Escherichia coli (strain K12)).